Reading from the N-terminus, the 447-residue chain is Nuclear envelope integral membrane protein 2 (447 aa).

An N-terminal signal peptide occupies residues 1–28 (MGPRRLPWARPGPALGLLLLALAGAVPA). Helical transmembrane passes span 144 to 164 (EMLDGKLLFLFAAGIFLFHFA), 173 to 193 (FFYLSGIILGVLALLVFVLLA), 202 to 222 (STFWILLSGCWMSSLYLIYCF), 235 to 255 (IYVLGYFVAVGTLSFATCYQH), and 275 to 295 (AFVFIYCGVNIPQVAYAIIAV). Residues 410-438 (TRTESEQDETTSYIHEGDDENEDEIHEPI) form a disordered region.

It belongs to the NEMP family.

Its subcellular location is the nucleus inner membrane. In Gallus gallus (Chicken), this protein is Nuclear envelope integral membrane protein 2 (NEMP2).